Consider the following 84-residue polypeptide: Small ribosomal subunit protein uS17 (84 aa).

This sequence belongs to the universal ribosomal protein uS17 family. In terms of assembly, part of the 30S ribosomal subunit.

Functionally, one of the primary rRNA binding proteins, it binds specifically to the 5'-end of 16S ribosomal RNA. In Photobacterium profundum (strain SS9), this protein is Small ribosomal subunit protein uS17.